The sequence spans 97 residues: Co-chaperonin GroES (97 aa).

This sequence belongs to the GroES chaperonin family. In terms of assembly, heptamer of 7 subunits arranged in a ring. Interacts with the chaperonin GroEL.

It localises to the cytoplasm. Its function is as follows. Together with the chaperonin GroEL, plays an essential role in assisting protein folding. The GroEL-GroES system forms a nano-cage that allows encapsulation of the non-native substrate proteins and provides a physical environment optimized to promote and accelerate protein folding. GroES binds to the apical surface of the GroEL ring, thereby capping the opening of the GroEL channel. This Buchnera aphidicola subsp. Baizongia pistaciae (strain Bp) protein is Co-chaperonin GroES.